A 425-amino-acid polypeptide reads, in one-letter code: MGEEANDDKKPTTKFELERETELRFEVEASQSVQLELLAGMAEIFGTELTRNKKFTFDAGAKVAVFTWHGCSLQLSGRTEVAYVSKDTPMLLYLNTHTALEQMRRQAEKEEERGPRVMVVGPTDVGKSTVCRLLLNYAVRLGRRPTYVELDVGQGSVSIPGTMGALYIERPADVEEGFSIQAPLVYHFGSTTPGTNIKLYNKITSRLADVFNQRCEVNRRASVSGCVINTCGWVKGSGYQALVHAASAFEVDVVVVLDQERLYNELKRDLPHFVRTVLLPKSGGVVERSKDFRRECRDERIREYFYGFRGCFYPHAFNVKFSDVKIYKVGAPTIPDSCLPLGMSQEDNQLKLVPVTPGRDMVHHLLSVSTAEGTEENLSETSVAGFIVVTSVDLEHQVFTVLSPAPRPLPKNFLLIMDIRFMDLK.

ATP-binding positions include Glu22, Lys62, and 124–129 (DVGKST).

It belongs to the Clp1 family. Clp1 subfamily. In terms of assembly, component of the tRNA splicing endonuclease complex, composed of CLP1, TSEN2, TSEN15, TSEN34 and TSEN54. Component of pre-mRNA cleavage complex II (CF-II). Also associates with numerous components of the pre-mRNA cleavage complex I (CF-I/CFIm), including NUDT21, CPSF2, CPSF3, CPSF6 and CPSF7. Interacts with CSTF2 and SYMPK. It depends on Mg(2+) as a cofactor. Requires Mn(2+) as cofactor. The cofactor is Ni(2+).

Its subcellular location is the nucleus. It carries out the reaction a 5'-end dephospho-2'-deoxyribonucleoside-DNA + ATP = a 5'-end 5'-phospho-2'-deoxyribonucleoside-DNA + ADP + H(+). The catalysed reaction is a 5'-end dephospho-ribonucleoside-RNA + ATP = a 5'-end 5'-phospho-ribonucleoside-RNA + ADP + H(+). Functionally, polynucleotide kinase that can phosphorylate the 5'-hydroxyl groups of double-stranded RNA (dsRNA), single-stranded RNA (ssRNA), double-stranded DNA (dsDNA) and double-stranded DNA:RNA hybrids. dsRNA is phosphorylated more efficiently than dsDNA, and the RNA component of a DNA:RNA hybrid is phosphorylated more efficiently than the DNA component. Plays a key role in both tRNA splicing and mRNA 3'-end formation. Component of the tRNA splicing endonuclease complex: phosphorylates the 5'-terminus of the tRNA 3'-exon during tRNA splicing; this phosphorylation event is a prerequisite for the subsequent ligation of the two exon halves and the production of a mature tRNA. Its role in tRNA splicing and maturation is required for cerebellar development. Component of the pre-mRNA cleavage complex II (CF-II), which seems to be required for mRNA 3'-end formation. Also phosphorylates the 5'-terminus of exogenously introduced short interfering RNAs (siRNAs), which is a necessary prerequisite for their incorporation into the RNA-induced silencing complex (RISC). However, endogenous siRNAs and microRNAs (miRNAs) that are produced by the cleavage of dsRNA precursors by DICER1 already contain a 5'-phosphate group, so this protein may be dispensible for normal RNA-mediated gene silencing. The chain is Polyribonucleotide 5'-hydroxyl-kinase Clp1 from Bos taurus (Bovine).